The primary structure comprises 132 residues: Small ribosomal subunit protein uS19 (132 aa).

This sequence belongs to the universal ribosomal protein uS19 family.

In terms of biological role, protein S19 forms a complex with S13 that binds strongly to the 16S ribosomal RNA. The sequence is that of Small ribosomal subunit protein uS19 (rps19) from Pyrococcus abyssi (strain GE5 / Orsay).